We begin with the raw amino-acid sequence, 677 residues long: Fidgetin-like protein 1 (677 aa).

Over residues 203–216 the composition is skewed to polar residues; that stretch reads TSSAPSGESTTATF. Disordered regions lie at residues 203 to 232, 249 to 324, and 337 to 378; these read TSSA…PQSF, VPSG…SFNG, and GIFG…TDDR. Lysine 226 participates in a covalent cross-link: Glycyl lysine isopeptide (Lys-Gly) (interchain with G-Cter in SUMO2). Residues 264–280 are compositionally biased toward polar residues; sequence DSDTINMLSNPTLNKAP. Basic and acidic residues predominate over residues 281-292; that stretch reads SKTEDSGQREDN. Lysine 341 is modified (N6-acetyllysine). Polar residues predominate over residues 347-358; it reads SNKQDGSEQNGN. ATP-binding positions include alanine 407 and 447 to 452; that span reads GTGKTL.

This sequence belongs to the AAA ATPase family. In terms of assembly, hexamer. Interacts (via N-terminal one-half region) with RAD51; the interaction is direct. Interacts (via N-terminal one-half region) with SPIDR (via the C-terminal region); the interaction is direct. Interacts with FIRRM; may regulate homologous recombination. Mg(2+) serves as cofactor.

The protein localises to the nucleus. It is found in the cytoplasm. It localises to the perinuclear region. The enzyme catalyses ATP + H2O = ADP + phosphate + H(+). Functionally, involved in DNA double-strand break (DBS) repair via homologous recombination (HR). Recruited at DSB sites independently of BRCA2, RAD51 and RAD51 paralogs in a H2AX-dependent manner. May regulate osteoblast proliferation and differentiation. May play a role in the control of male meiosis dynamic. This Rattus norvegicus (Rat) protein is Fidgetin-like protein 1 (Fignl1).